The chain runs to 790 residues: Pentatricopeptide repeat-containing protein OTP51, chloroplastic (790 aa).

The transit peptide at 1-56 (MATTSPCAAPSPSLRCPLALSHPFASPPPPPALRLAGPKLLPGRLAVSPPPGIPAV) directs the protein to the chloroplast. PPR repeat units follow at residues 182–216 (NFALATRVADCLGRDGKVEKCREVFEAMVKQGRVP), 217–254 (AESTFHILIVAYLSVPKGRCLEEACTIYNQMIQMGGYK), 256–296 (RLSL…NLDV), 299–333 (DVYAGLIWLHSYQDVIDRERIIALRKEMKQAGFDE), 334–368 (GIDVLVSVMRAFSKEGNVAETEATWHNILQSGSDL), 369–403 (PVQAYVCRMEAYARTGEPMKSLDMFKEMKDKNIPP), 404–438 (NVASYHKIIEIMTKALEVDIVEQLMNEFIESDMKH), 439–469 (LMPAFLDLMYMYMDLDMHEKLELTFLKCIAR), 473–507 (NRILYTIYLESLVKVGNIEKAEEVFGEMHNNGMIG), and 509–543 (NTKSCNIMLRGYLSAEDYQKAEKVYDMMSKKKYDV). A disordered region spans residues 762 to 790 (GSSIGSDGTQDTDTDSDDDMQMSDTERDE). Positions 771–790 (QDTDTDSDDDMQMSDTERDE) are enriched in acidic residues.

This sequence belongs to the PPR family. P subfamily.

Its subcellular location is the plastid. It localises to the chloroplast. In terms of biological role, promotes the splicing of group II introns in chloroplasts. Required for the splicing of intron 2 of plastid ycf3 transcripts, a factor required for the assembly of photosystem I (PSI). Involved in the splicing of atpF, ndhA, petB and rps16 chloroplastic transcripts. Required for the assembly of PSI. The polypeptide is Pentatricopeptide repeat-containing protein OTP51, chloroplastic (Oryza sativa subsp. japonica (Rice)).